The primary structure comprises 209 residues: Uracil phosphoribosyltransferase (209 aa).

5-phospho-alpha-D-ribose 1-diphosphate is bound by residues R79, R104, and 131-139 (DPMLATGGS). Residues I194 and 199 to 201 (GDA) each bind uracil. D200 serves as a coordination point for 5-phospho-alpha-D-ribose 1-diphosphate.

The protein belongs to the UPRTase family. Requires Mg(2+) as cofactor.

It carries out the reaction UMP + diphosphate = 5-phospho-alpha-D-ribose 1-diphosphate + uracil. It functions in the pathway pyrimidine metabolism; UMP biosynthesis via salvage pathway; UMP from uracil: step 1/1. Its activity is regulated as follows. Allosterically activated by GTP. Its function is as follows. Catalyzes the conversion of uracil and 5-phospho-alpha-D-ribose 1-diphosphate (PRPP) to UMP and diphosphate. The protein is Uracil phosphoribosyltransferase of Lactobacillus gasseri (strain ATCC 33323 / DSM 20243 / BCRC 14619 / CIP 102991 / JCM 1131 / KCTC 3163 / NCIMB 11718 / NCTC 13722 / AM63).